Here is a 75-residue protein sequence, read N- to C-terminus: uncharacterized protein (75 aa).

The helical transmembrane segment at Val-49–Phe-69 threads the bilayer.

The protein localises to the host membrane. This is an uncharacterized protein from Saccharolobus islandicus (Sulfolobus islandicus).